A 77-amino-acid polypeptide reads, in one-letter code: MKLIIFTGLVLFGIVSLIEAQAENEKACLPQYQVCTDAPGNCCSNLVCDCYGRYKSGARIGRNCFCLQKGVIYKRED.

The N-terminal stretch at 1 to 20 (MKLIIFTGLVLFGIVSLIEA) is a signal peptide. The propeptide occupies 21–26 (QAENEK).

It belongs to the neurotoxin 19 (CSTX) family. 08 (U8-Lctx) subfamily. In terms of processing, contains 4 disulfide bonds. In terms of tissue distribution, expressed by the venom gland.

Its subcellular location is the secreted. The sequence is that of U8-lycotoxin-Ls1v from Lycosa singoriensis (Wolf spider).